The following is a 582-amino-acid chain: DNA mismatch repair protein MutL (582 aa).

Belongs to the DNA mismatch repair MutL/HexB family.

Its function is as follows. This protein is involved in the repair of mismatches in DNA. It is required for dam-dependent methyl-directed DNA mismatch repair. May act as a 'molecular matchmaker', a protein that promotes the formation of a stable complex between two or more DNA-binding proteins in an ATP-dependent manner without itself being part of a final effector complex. The sequence is that of DNA mismatch repair protein MutL from Acidiphilium cryptum (strain JF-5).